Consider the following 567-residue polypeptide: DNA ligase B (567 aa).

Lysine 132 serves as the catalytic N6-AMP-lysine intermediate.

The protein belongs to the NAD-dependent DNA ligase family. LigB subfamily.

It carries out the reaction NAD(+) + (deoxyribonucleotide)n-3'-hydroxyl + 5'-phospho-(deoxyribonucleotide)m = (deoxyribonucleotide)n+m + AMP + beta-nicotinamide D-nucleotide.. Functionally, catalyzes the formation of phosphodiester linkages between 5'-phosphoryl and 3'-hydroxyl groups in double-stranded DNA using NAD as a coenzyme and as the energy source for the reaction. This Yersinia pseudotuberculosis serotype O:1b (strain IP 31758) protein is DNA ligase B.